A 1574-amino-acid chain; its full sequence is Disco-interacting protein 2 homolog B (1574 aa).

3 positions are modified to phosphoserine: serine 9, serine 50, and serine 53. The DMAP1-binding domain occupies 12–130; that stretch reads AVAALPPEVR…PMPTKRRSTF (119 aa). Positions 31 to 166 are disordered; the sequence is LSEGDITQKG…AALSAALQQS (136 aa). A compositionally biased stretch (polar residues) spans 52 to 62; the sequence is YSPQTQETDSI. Low complexity predominate over residues 69–82; it reads QTPAPTAAQTSAPS. Threonine 70 is modified (phosphothreonine). The segment covering 91–103 has biased composition (basic and acidic residues); that stretch reads GARDERYRSDIHT. Serine 99 is subject to Phosphoserine. At threonine 139 the chain carries Phosphothreonine. 3 positions are modified to phosphoserine: serine 145, serine 147, and serine 152. The segment covering 154-166 has biased composition (low complexity); that stretch reads RRQAALSAALQQS. 3 positions are modified to phosphoserine: serine 177, serine 192, and serine 202. Residues 178–200 are disordered; sequence IQGSSTSSSASSTLSHGEVKGTS. A compositionally biased stretch (low complexity) spans 181 to 192; sequence SSTSSSASSTLS. The segment at 217–244 is disordered; sequence APPDVTATTSSSSSSLRPANIDLPPSGI. Serine 256 carries the post-translational modification Phosphoserine.

It belongs to the DIP2 family. As to quaternary structure, interacts with alpha-tubulin. In terms of tissue distribution, highly expressed in brain and spinal cord (at protein level). In brain, expression is detected in the main olfactory bulb, cortex, lateral ventricle, cornu ammonis 1, cornu ammonis 3, dentate gyrus, striatum, cerebellar cortex and medial habenula. Expressed primarily in neurons including excitatory pyramidal neurons and inhibitory interneurons.

Its subcellular location is the cell projection. It localises to the dendrite. The protein localises to the axon. The protein resides in the perikaryon. Negatively regulates axonal outgrowth and is essential for normal synaptic transmission. Not required for regulation of axon polarity. Promotes acetylation of alpha-tubulin. This is Disco-interacting protein 2 homolog B (Dip2b) from Mus musculus (Mouse).